The primary structure comprises 515 residues: Na(+)/H(+) antiporter NhaB (515 aa).

13 helical membrane-spanning segments follow: residues 23–43, 44–64, 88–108, 119–139, 143–163, 202–222, 238–258, 303–323, 324–344, 357–377, 389–409, 447–467, and 477–497; these read IIVF…FIAG, WCLV…YPLQ, IMAS…IYFM, LLIT…SAAF, FLDA…FYGV, LMMH…VGEP, FFIR…ITCV, GIIG…VGLI, GLSV…STIG, LVVF…GPII, LLLF…VFVA, ATPN…APLI, and MALP…EYIL.

Belongs to the NhaB Na(+)/H(+) (TC 2.A.34) antiporter family.

It is found in the cell inner membrane. It carries out the reaction 2 Na(+)(in) + 3 H(+)(out) = 2 Na(+)(out) + 3 H(+)(in). Its function is as follows. Na(+)/H(+) antiporter that extrudes sodium in exchange for external protons. The protein is Na(+)/H(+) antiporter NhaB of Mannheimia succiniciproducens (strain KCTC 0769BP / MBEL55E).